We begin with the raw amino-acid sequence, 501 residues long: Probable cytosol aminopeptidase (501 aa).

The Mn(2+) site is built by K272 and D277. Residue K284 is part of the active site. Residues D295, D354, and E356 each contribute to the Mn(2+) site. R358 is an active-site residue.

This sequence belongs to the peptidase M17 family. The cofactor is Mn(2+).

The protein localises to the cytoplasm. The enzyme catalyses Release of an N-terminal amino acid, Xaa-|-Yaa-, in which Xaa is preferably Leu, but may be other amino acids including Pro although not Arg or Lys, and Yaa may be Pro. Amino acid amides and methyl esters are also readily hydrolyzed, but rates on arylamides are exceedingly low.. It carries out the reaction Release of an N-terminal amino acid, preferentially leucine, but not glutamic or aspartic acids.. In terms of biological role, presumably involved in the processing and regular turnover of intracellular proteins. Catalyzes the removal of unsubstituted N-terminal amino acids from various peptides. This Buchnera aphidicola subsp. Baizongia pistaciae (strain Bp) protein is Probable cytosol aminopeptidase.